A 219-amino-acid polypeptide reads, in one-letter code: Probable N-acetyltransferase camello (219 aa).

2 consecutive transmembrane segments (helical) span residues 44 to 64 (FITF…VLAL) and 66 to 86 (SLVA…HGLA). In terms of domain architecture, N-acetyltransferase spans 62–211 (LALTSLVALL…VHQYTSFTVA (150 aa)).

It belongs to the camello family.

It is found in the golgi apparatus membrane. Its function is as follows. Plays a role in regulation of gastrulation, possibly by controlled reduction of cell adhesion in the periblastopore region which is necessary for optimal cell motility. In Xenopus tropicalis (Western clawed frog), this protein is Probable N-acetyltransferase camello.